Reading from the N-terminus, the 622-residue chain is Transcription factor SKN7 (622 aa).

Residues 1–12 (MSFSTINSNVNK) show a composition bias toward polar residues. Residues 1 to 29 (MSFSTINSNVNKTTGDSNNNTTENSSTAD) form a disordered region. Over residues 13 to 27 (TTGDSNNNTTENSST) the composition is skewed to low complexity. The interval 84-190 (ANEFVRKLFR…GLDNIKRKIP (107 aa)) is DNA-binding domain. The interval 212 to 303 (TNPNNPSGSL…NNFNTLCSTL (92 aa)) is hydrophobic repeat HR-A/B. Residues 240–260 (FGNLRRRVDKLQKELDMSKME) adopt a coiled-coil conformation. Residues 378-492 (HVLLVEDDAV…DLHSILIRYL (115 aa)) form the Response regulatory domain. Aspartate 427 carries the post-translational modification 4-aspartylphosphate. 2 disordered regions span residues 501-579 (QQLP…QHHN) and 599-622 (TVPHSSMGSTPQLPQSTLQENQLS). Over residues 512–527 (THSNTNTANSNPNTIN) the composition is skewed to low complexity. Residues 537-554 (DNPSTTTPVTPGASISSA) show a composition bias toward polar residues. A compositionally biased stretch (low complexity) spans 555–578 (QHVQQGQQEQQHQIFHAQQQQQHH). Positions 600 to 622 (VPHSSMGSTPQLPQSTLQENQLS) are enriched in polar residues.

This sequence belongs to the SKN7 family. As to quaternary structure, homotrimer. In terms of processing, the phosphorelay mechanism involves the sequential transfer of a phosphate group from 'His-576' (H1) to 'Asp-1144' (D1) of SLN1, then to 'His-64' (H2) of YPD1 and finally to Asp-427 (D2) of SKN7.

The protein resides in the nucleus. Its function is as follows. Transcription factor that is part of a SLN1-YPD1-SKN7 two-component regulatory system, which controls gene expression in response to changes in the osmolarity of the extracellular environment. Under low osmotic conditions, phosphorylated and activated by the phosphorelay intermediate protein YPD1. Also activated in response to oxidative stress, independent on the two-component regulatory system. Regulates heat shock genes in response to oxidative stress and genes involved in cell wall integrity in response to osmotic changes. The polypeptide is Transcription factor SKN7 (SKN7) (Saccharomyces cerevisiae (strain ATCC 204508 / S288c) (Baker's yeast)).